Consider the following 265-residue polypeptide: uncharacterized protein (265 aa).

The interval 1 to 160 is disordered; that stretch reads MDKSKNLFDL…STEPVVAAPV (160 aa). Residues 28 to 42 show a composition bias toward low complexity; sequence AAAAPVAAKKPVAPK. Composition is skewed to basic and acidic residues over residues 73–85 and 102–119; these read SEER…DSKS and RQFD…ENKK.

It belongs to the SERBP1-HABP4 family.

Functionally, ribosome-binding protein that acts as a regulator of mRNA translation by promoting ribosome inactivation. This is an uncharacterized protein from Dictyostelium discoideum (Social amoeba).